We begin with the raw amino-acid sequence, 311 residues long: Putative protease MJ0651 (311 aa).

Ser128 functions as the Nucleophile in the catalytic mechanism. The active-site Proton donor/acceptor is Lys180.

Belongs to the peptidase S49 family.

This chain is Putative protease MJ0651, found in Methanocaldococcus jannaschii (strain ATCC 43067 / DSM 2661 / JAL-1 / JCM 10045 / NBRC 100440) (Methanococcus jannaschii).